The following is a 625-amino-acid chain: Vacuolar-sorting receptor 2 (625 aa).

Residues 1 to 19 (MRTTNVWLVVIVWVTVGWS) form the signal peptide. Residues 20-567 (SCTGRFVVEK…INRDARGDFS (548 aa)) lie on the Lumenal side of the membrane. Residues 55–167 (QYGGSMSGAV…SLGSAIKTAI (113 aa)) enclose the PA domain. N-linked (GlcNAc...) asparagine glycans are attached at residues Asn147, Asn293, and Asn433. EGF-like domains follow at residues 415–465 (ETNE…THCE) and 468–515 (GALR…KECK). 7 cysteine pairs are disulfide-bonded: Cys419–Cys437, Cys426–Cys446, Cys448–Cys464, Cys472–Cys492, Cys479–Cys500, Cys502–Cys514, and Cys544–Cys557. The 43-residue stretch at 516-558 (DVNECEEKTACQCRDCKCKNTWGSYECSCSGSLLYIREHDICI) folds into the EGF-like 3; calcium-binding domain. The helical transmembrane segment at 568–588 (WGVIWIIIMGLGAAALGAYTV) threads the bilayer. The Cytoplasmic segment spans residues 589 to 625 (YKYRIRTYMDSEIRAIMAQYMPLDNNPNTQLSSQLEL). Residues 608–611 (YMPL) carry the Tyrosine-based internalization motif motif.

Belongs to the VSR (BP-80) family. In terms of tissue distribution, expressed only in flowers.

Its subcellular location is the membrane. It is found in the golgi apparatus membrane. The protein localises to the cytoplasmic vesicle. The protein resides in the clathrin-coated vesicle membrane. It localises to the prevacuolar compartment membrane. Vacuolar-sorting receptor (VSR) involved in clathrin-coated vesicles sorting from Golgi apparatus to vacuoles. In Arabidopsis thaliana (Mouse-ear cress), this protein is Vacuolar-sorting receptor 2.